Here is a 270-residue protein sequence, read N- to C-terminus: Formamidopyrimidine-DNA glycosylase (270 aa).

Pro2 functions as the Schiff-base intermediate with DNA in the catalytic mechanism. Glu3 functions as the Proton donor in the catalytic mechanism. The active-site Proton donor; for beta-elimination activity is Lys58. DNA is bound by residues His91, Arg109, and Arg151. The FPG-type zinc finger occupies 236 to 270 (LVYGRGGEACKTCQKPLKEIRMNDRTTVYCVTCQQ). The active-site Proton donor; for delta-elimination activity is Arg260.

The protein belongs to the FPG family. In terms of assembly, monomer. Requires Zn(2+) as cofactor.

The catalysed reaction is Hydrolysis of DNA containing ring-opened 7-methylguanine residues, releasing 2,6-diamino-4-hydroxy-5-(N-methyl)formamidopyrimidine.. It catalyses the reaction 2'-deoxyribonucleotide-(2'-deoxyribose 5'-phosphate)-2'-deoxyribonucleotide-DNA = a 3'-end 2'-deoxyribonucleotide-(2,3-dehydro-2,3-deoxyribose 5'-phosphate)-DNA + a 5'-end 5'-phospho-2'-deoxyribonucleoside-DNA + H(+). Functionally, involved in base excision repair of DNA damaged by oxidation or by mutagenic agents. Acts as a DNA glycosylase that recognizes and removes damaged bases. Has a preference for oxidized purines, such as 7,8-dihydro-8-oxoguanine (8-oxoG). Has AP (apurinic/apyrimidinic) lyase activity and introduces nicks in the DNA strand. Cleaves the DNA backbone by beta-delta elimination to generate a single-strand break at the site of the removed base with both 3'- and 5'-phosphates. This Cellvibrio japonicus (strain Ueda107) (Pseudomonas fluorescens subsp. cellulosa) protein is Formamidopyrimidine-DNA glycosylase.